A 348-amino-acid chain; its full sequence is Phospho-2-dehydro-3-deoxyheptonate aldolase, Trp-sensitive (348 aa).

Belongs to the class-I DAHP synthase family.

It catalyses the reaction D-erythrose 4-phosphate + phosphoenolpyruvate + H2O = 7-phospho-2-dehydro-3-deoxy-D-arabino-heptonate + phosphate. It functions in the pathway metabolic intermediate biosynthesis; chorismate biosynthesis; chorismate from D-erythrose 4-phosphate and phosphoenolpyruvate: step 1/7. Its function is as follows. Stereospecific condensation of phosphoenolpyruvate (PEP) and D-erythrose-4-phosphate (E4P) giving rise to 3-deoxy-D-arabino-heptulosonate-7-phosphate (DAHP). This Salmonella typhimurium (strain LT2 / SGSC1412 / ATCC 700720) protein is Phospho-2-dehydro-3-deoxyheptonate aldolase, Trp-sensitive (aroH).